Reading from the N-terminus, the 317-residue chain is Small ribosomal subunit protein RACK1 (317 aa).

7 WD repeats span residues 13 to 44 (GHSGWVTQIATTPKYPDMILSASRDKSIIMWK), 61 to 91 (GHSHFVSDVVISSDGQFALSGAWDGTLRLWD), 103 to 133 (GHTKDVLSVAFSADNRQIVSGSRDKTIKLWN), 146 to 178 (GHTEWVSCVRFSPNSSNPIIVSCGWDKMVKVWN), 190 to 220 (GHTGYLNTVTVSPDGSLCASGGKDGQAMLWD), 231 to 260 (DSGDVINALCFSPNRYWLCAATGPSIKIWD), and 281 to 311 (AEPPQCTSLAWSADGQTLFAGYTDNLIRVWQ).

The protein belongs to the WD repeat G protein beta family. Ribosomal protein RACK1 subfamily.

Its subcellular location is the cytoplasm. Its function is as follows. Involved in the recruitment, assembly and/or regulation of a variety of signaling molecules. Interacts with a wide variety of proteins and plays a role in many cellular processes. Required for VANGL2 membrane localization, inhibits Wnt signaling and regulates cellular polarization and oriented cell division during gastrulation. This chain is Small ribosomal subunit protein RACK1 (gnb2l1), found in Oreochromis niloticus (Nile tilapia).